Consider the following 240-residue polypeptide: 4-hydroxy-tetrahydrodipicolinate reductase (240 aa).

NAD(+) contacts are provided by residues 8 to 13 (GSTGKM), 78 to 80 (GTT), and 102 to 105 (SANM). H134 acts as the Proton donor/acceptor in catalysis. (S)-2,3,4,5-tetrahydrodipicolinate is bound at residue H135. The Proton donor role is filled by K138. A (S)-2,3,4,5-tetrahydrodipicolinate-binding site is contributed by 144-145 (GT).

It belongs to the DapB family.

The protein localises to the cytoplasm. It carries out the reaction (S)-2,3,4,5-tetrahydrodipicolinate + NAD(+) + H2O = (2S,4S)-4-hydroxy-2,3,4,5-tetrahydrodipicolinate + NADH + H(+). It catalyses the reaction (S)-2,3,4,5-tetrahydrodipicolinate + NADP(+) + H2O = (2S,4S)-4-hydroxy-2,3,4,5-tetrahydrodipicolinate + NADPH + H(+). The protein operates within amino-acid biosynthesis; L-lysine biosynthesis via DAP pathway; (S)-tetrahydrodipicolinate from L-aspartate: step 4/4. Its function is as follows. Catalyzes the conversion of 4-hydroxy-tetrahydrodipicolinate (HTPA) to tetrahydrodipicolinate. In Rickettsia canadensis (strain McKiel), this protein is 4-hydroxy-tetrahydrodipicolinate reductase.